Reading from the N-terminus, the 98-residue chain is NADH-ubiquinone oxidoreductase chain 4L (98 aa).

The next 3 membrane-spanning stretches (helical) occupy residues 1 to 21 (MTPL…GVLI), 28 to 48 (STLL…SLLI), and 59 to 79 (APLI…ALLV).

Belongs to the complex I subunit 4L family. In terms of assembly, core subunit of respiratory chain NADH dehydrogenase (Complex I) which is composed of 45 different subunits.

It localises to the mitochondrion inner membrane. The catalysed reaction is a ubiquinone + NADH + 5 H(+)(in) = a ubiquinol + NAD(+) + 4 H(+)(out). In terms of biological role, core subunit of the mitochondrial membrane respiratory chain NADH dehydrogenase (Complex I) which catalyzes electron transfer from NADH through the respiratory chain, using ubiquinone as an electron acceptor. Part of the enzyme membrane arm which is embedded in the lipid bilayer and involved in proton translocation. The chain is NADH-ubiquinone oxidoreductase chain 4L (MT-ND4L) from Tarsipes rostratus (Honey possum).